An 88-amino-acid polypeptide reads, in one-letter code: DNA-directed RNA polymerase subunit omega (88 aa).

Belongs to the RNA polymerase subunit omega family. In terms of assembly, the RNAP catalytic core consists of 2 alpha, 1 beta, 1 beta' and 1 omega subunit. When a sigma factor is associated with the core the holoenzyme is formed, which can initiate transcription.

It carries out the reaction RNA(n) + a ribonucleoside 5'-triphosphate = RNA(n+1) + diphosphate. Promotes RNA polymerase assembly. Latches the N- and C-terminal regions of the beta' subunit thereby facilitating its interaction with the beta and alpha subunits. The sequence is that of DNA-directed RNA polymerase subunit omega from Yersinia pestis (strain Pestoides F).